We begin with the raw amino-acid sequence, 480 residues long: Putative auxin transporter-like protein 4 (480 aa).

The Cytoplasmic portion of the chain corresponds to 1–66 (MASEKVETIV…DAWFSCASNQ (66 aa)). Residues 67 to 84 (VAQVLLTLPYSFSQLGMA) traverse the membrane as a helical segment. Residues 85-86 (SG) are Extracellular-facing. A helical transmembrane segment spans residues 87–107 (VAFQVFYGLMGSWTAYLISVL). Topologically, residues 108–143 (YVEYRTRRERDKVDFRNHVIQWFEVLDGLLGRHWRN) are cytoplasmic. A helical transmembrane segment spans residues 144–164 (AGLLFNCTFLLFGSVIQLIAC). Over 165 to 179 (ASNIYYINDRLDKRT) the chain is Extracellular. The helical transmembrane segment at 180–200 (WTYIFGACCATTVFVPSFHNY) threads the bilayer. At 201 to 203 (RVW) the chain is on the cytoplasmic side. A helical transmembrane segment spans residues 204 to 224 (SFLGLLMTSYTAWYLTVAAVV). The Extracellular portion of the chain corresponds to 225-241 (HGKVDGAAPRAGPSKTM). The helical transmembrane segment at 242 to 262 (VLYFTGATNILYTFGGHAVTV) threads the bilayer. Residues 263-275 (EIMHAMWRPRRFK) are Cytoplasmic-facing. Residues 276 to 296 (MIYLAATAYVLTLTLPSAAAM) traverse the membrane as a helical segment. Over 297-323 (YWAFGDALLDHSNAFALLPRTPWRDAA) the chain is Extracellular. Residues 324–344 (VVLMLIHQFITFGFACTPLYF) traverse the membrane as a helical segment. Residues 345–365 (VWEKAIGVHGGAGVLRRAAAR) lie on the Cytoplasmic side of the membrane. A helical transmembrane segment spans residues 366–386 (LPVVLPIWFLAVIFPFFGPIN). Ser-387 is a topological domain (extracellular). A helical membrane pass occupies residues 388 to 408 (TVGSFLVSFTVYIIPAMAHMA). Over 409-433 (TFAPAAARENAVEPPPRALGGWPGT) the chain is Cytoplasmic. Residues 434–454 (FAANCFVVAWVLVVGFGFGGW) traverse the membrane as a helical segment. Residues 455 to 480 (ASTVNFVRQVDTFGLFTKCYQCPPRH) are Extracellular-facing.

It belongs to the amino acid/polyamine transporter 2 family. Amino acid/auxin permease (AAAP) (TC 2.A.18.1) subfamily.

Its subcellular location is the cell membrane. Its function is as follows. Carrier protein involved in proton-driven auxin influx. May mediate the formation of auxin gradient from developing leaves (site of auxin biosynthesis) to tips. The chain is Putative auxin transporter-like protein 4 from Oryza sativa subsp. japonica (Rice).